A 316-amino-acid chain; its full sequence is MNVLLDTSIFLGKFLYYFLESLYYKIIPKKKKDVTGEIVLITGAASGLGRLLAIKFASLGAILVLWDINEEGNMETCRIIKEERDAKVFAYTCDCSNRQDVYRVADQVKKEVGNVTILINNAGVVTGREFLKTPDHMVERSFLVNVMSHFWTYKAFLPAMLEANHGHLVCISSFAGIVGINELSDYCASKFAAYGFAESLHFELKLLQKSKINTTIVCPYFIKTGMFEGCSTKYPLLLPMLTQEYAAQSILNAILEEQLYLIMPRFSHVALFLKQIISTNMMMTMAEYLGMDISLASFIEREKSGEVQTKTEGKQQ.

An NAD(+)-binding site is contributed by 40–64 (LITGAASGLGRLLAIKFASLGAILV). Residue serine 173 coordinates substrate. The active-site Proton acceptor is the tyrosine 186.

Belongs to the short-chain dehydrogenases/reductases (SDR) family.

The protein is Short-chain dehydrogenase/reductase family 16C member 6 (SDR16C6) of Bos taurus (Bovine).